The primary structure comprises 483 residues: Protein adenylyltransferase Fic (483 aa).

Residues 20-42 form a helical membrane-spanning segment; the sequence is AFFFIAGSLATFVFHALTSSSSV. TPR repeat units lie at residues 107 to 140 and 141 to 175; these read ALGA…APKH and PEVL…SPSN. The Inhibitory (S/T)XXXE(G/N) motif signature appears at 232 to 237; that stretch reads SVGIEG. Residues Glu236 and 317 to 320 contribute to the ATP site; that span reads VGGH. The Fido domain maps to 286 to 421; sequence ITLKDILELH…IRPFVRFIAD (136 aa). His364 is an active-site residue. Residues 368–375, 400–401, and Asn408 each bind ATP; these read DGNGRTSR and YY. Positions 464-483 are disordered; it reads SAPEPYESGSGLDSGVNGMP.

Belongs to the fic family. Homodimer.

It is found in the membrane. It catalyses the reaction L-tyrosyl-[protein] + ATP = O-(5'-adenylyl)-L-tyrosyl-[protein] + diphosphate. It carries out the reaction L-threonyl-[protein] + ATP = 3-O-(5'-adenylyl)-L-threonyl-[protein] + diphosphate. The enzyme catalyses 3-O-(5'-adenylyl)-L-threonyl-[protein] + H2O = L-threonyl-[protein] + AMP + H(+). With respect to regulation, the side chain of Glu-236 determines which of the two opposing activities (AMPylase or de-AMPylase) will take place. In response to endoplasmic reticulum stress, mediates de-AMPylase activity. Adenylyltransferase activity is inhibited by the inhibitory helix present at the N-terminus: Glu-236 binds ATP and competes with ATP-binding at Arg-375, thereby preventing adenylyltransferase activity. In unstressed cells, disengagement of Glu-236 promotes adenylyltransferase activity. Activation dissociates ATP-binding from Glu-236, allowing ordered binding of the entire ATP moiety with the alpha-phosphate in an orientation that is productive for accepting an incoming target hydroxyl side chain. Functionally, protein that can both mediate the addition of adenosine 5'-monophosphate (AMP) to specific residues of target proteins (AMPylation), and the removal of the same modification from target proteins (de-AMPylation), depending on the context. The side chain of Glu-236 determines which of the two opposing activities (AMPylase or de-AMPylase) will take place. Acts as a key regulator of the unfolded protein response (UPR) by mediating AMPylation or de-AMPylation of Hsc70-3/BiP. In unstressed cells, acts as an adenylyltransferase by mediating AMPylation of Hsc70-3/BiP at 'Thr-518', thereby inactivating it. In response to endoplasmic reticulum stress, acts as a phosphodiesterase by mediating removal of ATP (de-AMPylation) from Hsc70-3/BiP at 'Thr-518', leading to restore HSPA5/BiP activity. The chain is Protein adenylyltransferase Fic from Drosophila grimshawi (Hawaiian fruit fly).